A 363-amino-acid chain; its full sequence is Flagellar P-ring protein (363 aa).

The N-terminal stretch at 1–20 (MKYKLVLAVAVLVFSLPSQA) is a signal peptide.

It belongs to the FlgI family. As to quaternary structure, the basal body constitutes a major portion of the flagellar organelle and consists of four rings (L,P,S, and M) mounted on a central rod.

The protein resides in the periplasm. It is found in the bacterial flagellum basal body. Its function is as follows. Assembles around the rod to form the L-ring and probably protects the motor/basal body from shearing forces during rotation. The chain is Flagellar P-ring protein from Shewanella baltica (strain OS223).